A 20-amino-acid chain; its full sequence is Protein PR-L2 (20 aa).

A disordered region spans residues 1 to 20; it reads SVFAFENEQSSTIAPARLYK.

It belongs to the BetVI family.

This chain is Protein PR-L2, found in Lupinus luteus (European yellow lupine).